A 315-amino-acid chain; its full sequence is Probable cell division protein WhiA (315 aa).

Positions 280 to 313 (SLKELGEMLDPPVGKSGINHRLRKIEKIAEELRT) form a DNA-binding region, H-T-H motif.

It belongs to the WhiA family.

Involved in cell division and chromosome segregation. This Clostridium beijerinckii (strain ATCC 51743 / NCIMB 8052) (Clostridium acetobutylicum) protein is Probable cell division protein WhiA.